The primary structure comprises 975 residues: Cation-chloride cotransporter 1 (975 aa).

Disordered regions lie at residues 1-29 (MDSG…SKYR) and 104-124 (EQIQ…TQGH). Over 1-132 (MDSGDIEEAG…GHPKPPALKM (132 aa)) the chain is Cytoplasmic. A helical transmembrane segment spans residues 133-153 (GTMMGVFVPCLQNILGIIYYI). Residues 154-167 (RFTWIVGMAGIGQG) lie on the Extracellular side of the membrane. The chain crosses the membrane as a helical span at residues 168–188 (LVLVFLCGLCTFLTTISLSAI). The Cytoplasmic portion of the chain corresponds to 189-214 (ATNGAMKGGGPYYLIGRALGPEVGIS). A helical membrane pass occupies residues 215–235 (IGLCFFLGNAVAGALYVLGAV). The Extracellular portion of the chain corresponds to 236 to 273 (ETFLKAFPAAGIFRETITKVNGTAVSESIQSPNSHDLQ). N-linked (GlcNAc...) asparagine glycosylation occurs at asparagine 256. A helical transmembrane segment spans residues 274-294 (VYGIVVTILLCFIVFGGVKMI). Residues 295–296 (NR) are Cytoplasmic-facing. A helical transmembrane segment spans residues 297–317 (VAPAFLVPVLLSIFCIFIGIF). Residues 318 to 359 (LAKTDDPDNGITGLRLKSFKDNWGSAYQMTNDAGIPDPTGGT) are Extracellular-facing. A helical transmembrane segment spans residues 360 to 380 (YWSFNELVGLFFPAVTGIMAG). Topologically, residues 381 to 398 (SNRSASLKDTQKSIPVGT) are cytoplasmic. The helical transmembrane segment at 399 to 419 (LAATLTTTSLYLISVLFFGAV) threads the bilayer. At 420-434 (ATRDKLLTDRLLTAT) the chain is on the extracellular side. Residues 435–455 (IAWPFPAIVHVGIILSTLGAA) form a helical membrane-spanning segment. Residues 456–490 (LQSLTGAPRLLAAIANDDILPILNYFKVADTSEPH) lie on the Cytoplasmic side of the membrane. Residues 491–511 (IATLFTAFICIGCVVIGNLDL) traverse the membrane as a helical segment. The Extracellular segment spans residues 512-515 (ITPT). Residues 516–536 (VTMFYLLCYSGVNLSCFLLDL) traverse the membrane as a helical segment. The Cytoplasmic portion of the chain corresponds to 537–544 (LDAPSWRP). Residues 545 to 565 (RWKYHHWSLSFVGASLCIVIM) form a helical membrane-spanning segment. The Extracellular portion of the chain corresponds to 566 to 571 (FLISWS). A helical transmembrane segment spans residues 572–592 (FTVVAIALASLIYKYVGLKGK). Residues 593-975 (AGDWGDGFKS…YHRDVVTLFT (383 aa)) lie on the Cytoplasmic side of the membrane.

It belongs to the SLC12A transporter family. As to expression, expressed in young seedlings cotyledon tips, plant vasculature, root tips and axillary buds. Expressed in root vascular strand in the pericycle and other parenchyma cells bordering xylem vessels. Expressed in the xylem/symplast boundaries of rosette stems, rosette leaves and cauline leaves. Expressed in stipules, trichomes and hydathodes. Expressed in pollen grains.

It localises to the membrane. Cation/chloride cotransporter that mediates potassium-chloride and sodium-chloride cotransports. Involved in plant development and Cl(-) homeostasis. May be involved in long distance Cl(-) transport. Does not function as an H(+)-dependent cotransporter. This is Cation-chloride cotransporter 1 (CCC1) from Arabidopsis thaliana (Mouse-ear cress).